The following is a 185-amino-acid chain: Transcription factor FapR (185 aa).

The protein belongs to the FapR family.

Its function is as follows. Transcriptional factor involved in regulation of membrane lipid biosynthesis by repressing genes involved in fatty acid and phospholipid metabolism. This chain is Transcription factor FapR, found in Staphylococcus aureus (strain Mu3 / ATCC 700698).